Reading from the N-terminus, the 596-residue chain is MAITHYQMASFQSSFHFCMLRKTLRQKSSLHFAKRCEATNKIFQTHGSVAIYQKTLWTHDLIDGLETDFLINRKEKVNELEVNVARMFMDYENGDISNLELLELIDNIERLGLGHRFQTNMKRVLDKIATVNENSLGLKEEEEEEEEEEDNLHALSLKFRILRQSGYRVSQDFQRKFKESRGGLTGGLKELLSIYEASYLSLEGEPDLHEAKLFATEKLLKLTGHENEAMKDHVNHALDIPLYRRMLRLEARWYIDAYGKRKDANKQLLELAILDFNIVQSAHKRDLQEVSKWWEKTGLVRKLDFIRDRLMECFFWSVGMVFEPQYYTCRVELTKIATLITTIDDIYDVYGSLNELKVFTHAVKRWDINAVENMPEYLQLGFLALYNTINEMGYETLSAQGINIIPNLARVWGELLEAFLVEAEWTHNNYMPTFKDYLDNAWRSVSGMVLLTHGYFLMNQDVKDDAIESLENFHDLFKWSSMLFRLYNDLAALADEIDKDKSPNAISCYMYEHSVSEEVAREHVKTLIDKAWMKMIEARIACSEHMTDPLIDMAINLARVSSCMYQYGDGIKDPEARTKDRVMSIIIKPFDTSEIP.

The transit peptide at 1 to 35 (MAITHYQMASFQSSFHFCMLRKTLRQKSSLHFAKR) directs the protein to the chloroplast. (2E)-geranyl diphosphate contacts are provided by arginine 307, aspartate 344, aspartate 348, arginine 485, and asparagine 488. Mg(2+) contacts are provided by aspartate 344 and aspartate 348. Residues 344–348 (DDIYD) carry the DDXXD motif motif. Mg(2+) is bound by residues asparagine 488, alanine 492, and glutamate 496.

This sequence belongs to the terpene synthase family. Tpsb subfamily. Requires Mg(2+) as cofactor. It depends on Mn(2+) as a cofactor. Highly expressed in leaves, stems and disk florets. Detected in roots.

The protein localises to the plastid. It is found in the chloroplast. The enzyme catalyses (2E)-geranyl diphosphate = (E)-beta-ocimene + diphosphate. The protein operates within secondary metabolite biosynthesis; terpenoid biosynthesis. Functionally, monoterpene synthase involved in the biosynthesis of (E)-beta-ocimene as the major product and trace amounts of (Z)-beta-ocimene. Can only accept geranyl diphosphate as substrate. In Matricaria chamomilla var. recutita (German chamomile), this protein is (E)-beta-ocimene synthase, chloroplastic.